Consider the following 120-residue polypeptide: MYAIVRDRGMQYRVEEGQTLRIALLDAEPGSAIELGEVLLIGGEMPLVGAPTVDGAKVLATVLGEEKGDKIVVFRYKNKKRYRRRTGHRQEYTRVSIDKIVVGANEQHVTNTPEGETNGA.

It belongs to the bacterial ribosomal protein bL21 family. Part of the 50S ribosomal subunit. Contacts protein L20.

This protein binds to 23S rRNA in the presence of protein L20. This chain is Large ribosomal subunit protein bL21, found in Roseiflexus castenholzii (strain DSM 13941 / HLO8).